The primary structure comprises 184 residues: MSTTDLTSPAHAAVESAGTTAIAEDLLARVLEPYSYKGCRYLLDARYHADDDSVLAYGNFTISESAYIRSTGHFNAVELILCFNQLAYSAFAPAVANEEIPQLRGWSLEDYFQHQLASMFIRNSSSRFNRPINPAKFSARLQCRNLQVVQRTWRYLLVPCAIEFWDEDGGAASGEVELAALNIP.

The protein belongs to the FcoT family.

It catalyses the reaction a (3R)-3-[(carboxymethyl)amino]fatty acid + holo-[ACP] + H(+) = a (2E)-enoyl-[ACP] + glycine + H2O. The enzyme catalyses (3R)-3-[(carboxylmethyl)amino]decanoate + holo-[ACP] + H(+) = (2E)-decenoyl-[ACP] + glycine + H2O. Involved in the biosynthesis of a unique class of isonitrile lipopeptides (INLPs) that seem to play a role in metal acquisition in M.marinum. Catalyzes a Michael addition of glycine to the beta-position of an alpha,beta-unsaturated fatty acyl-[ACP], producing a (3R)-3-[(carboxymethyl)amino]fatty acid. Acts on the (2E)-decenoyl moiety loaded on the acyl-carrier protein MmaB, forming the product (3R)-3-[(carboxymethyl)amino]decanoate released from MmaB. In Mycobacterium marinum (strain ATCC BAA-535 / M), this protein is (2E)-enoyl-[ACP] glycyltransferase.